Here is a 509-residue protein sequence, read N- to C-terminus: Cytochrome P450 monooxygenase CYP512U6 (509 aa).

A helical membrane pass occupies residues Val-12–Thr-29. Cys-446 is a heme binding site.

Belongs to the cytochrome P450 family. It depends on heme as a cofactor.

The protein localises to the membrane. The catalysed reaction is ganoderate DM + reduced [NADPH--hemoprotein reductase] + O2 = hainanate A + oxidized [NADPH--hemoprotein reductase] + H2O + H(+). The enzyme catalyses ganoderate TR + reduced [NADPH--hemoprotein reductase] + O2 = ganoderate Jc + oxidized [NADPH--hemoprotein reductase] + H2O + H(+). It functions in the pathway secondary metabolite biosynthesis; terpenoid biosynthesis. In terms of biological role, cytochrome P450 monooxygenase that hydroxylates the ganoderic acids DM and TR at the C-23 position to produce hainanic acid A and ganoderic acid Jc, respectively. In Ganoderma lucidum (Ling zhi medicinal fungus), this protein is Cytochrome P450 monooxygenase CYP512U6.